We begin with the raw amino-acid sequence, 354 residues long: Methionine import ATP-binding protein MetN (354 aa).

Residues 8-250 enclose the ABC transporter domain; the sequence is LDHIDITFRQ…PKEALTQKFI (243 aa). 42-49 provides a ligand contact to ATP; the sequence is GYSGAGKS.

The protein belongs to the ABC transporter superfamily. Methionine importer (TC 3.A.1.24) family. The complex is composed of two ATP-binding proteins (MetN), two transmembrane proteins (MetI) and a solute-binding protein (MetQ).

It is found in the cell membrane. The catalysed reaction is L-methionine(out) + ATP + H2O = L-methionine(in) + ADP + phosphate + H(+). It carries out the reaction D-methionine(out) + ATP + H2O = D-methionine(in) + ADP + phosphate + H(+). Functionally, part of the ABC transporter complex MetNIQ involved in methionine import. Responsible for energy coupling to the transport system. This is Methionine import ATP-binding protein MetN from Streptococcus pyogenes serotype M6 (strain ATCC BAA-946 / MGAS10394).